A 267-amino-acid polypeptide reads, in one-letter code: MPHTEHIWRNVDAVRRQAPLVHSITNFVVMNVTANALLAAGASPIMAHAREEMAELVNIVSSLVLNIGTLSAPWIDSMFLAGAAAHERGIPVVLDPVGAGASTLRTTTAAQLMERVRPAIVRGNGSEIMALAGAAGATRGVDSTRDAHAAADSARALSRRHHCVTVVSGPVDLVTDGDEEVLITGGHELMPRVTGMGCTATVLVAAHAAVAASPLEGAVSGMAAMSAAGSMAAERAAGPGSFAMHFIDALYALSEADIRARVRVGRP.

M46 is a substrate binding site. ATP contacts are provided by R122 and S168. G195 provides a ligand contact to substrate.

The protein belongs to the Thz kinase family. The cofactor is Mg(2+).

The enzyme catalyses 5-(2-hydroxyethyl)-4-methylthiazole + ATP = 4-methyl-5-(2-phosphooxyethyl)-thiazole + ADP + H(+). Its pathway is cofactor biosynthesis; thiamine diphosphate biosynthesis; 4-methyl-5-(2-phosphoethyl)-thiazole from 5-(2-hydroxyethyl)-4-methylthiazole: step 1/1. Catalyzes the phosphorylation of the hydroxyl group of 4-methyl-5-beta-hydroxyethylthiazole (THZ). The sequence is that of Hydroxyethylthiazole kinase from Nitratidesulfovibrio vulgaris (strain DSM 19637 / Miyazaki F) (Desulfovibrio vulgaris).